The following is an 820-amino-acid chain: Phosphoenolpyruvate synthase (820 aa).

His-438 (tele-phosphohistidine intermediate) is an active-site residue. Residues Arg-539, Arg-587, Glu-689, Gly-710, Ser-711, Asn-712, and Asp-713 each coordinate substrate. Residue Glu-689 coordinates Mg(2+). Asp-713 provides a ligand contact to Mg(2+). Cys-762 serves as the catalytic Proton donor.

This sequence belongs to the PEP-utilizing enzyme family. The cofactor is Mg(2+).

It catalyses the reaction pyruvate + ATP + H2O = phosphoenolpyruvate + AMP + phosphate + 2 H(+). The protein operates within carbohydrate biosynthesis; gluconeogenesis. Its function is as follows. Catalyzes the phosphorylation of pyruvate to phosphoenolpyruvate. In Aeropyrum pernix (strain ATCC 700893 / DSM 11879 / JCM 9820 / NBRC 100138 / K1), this protein is Phosphoenolpyruvate synthase (ppsA).